A 340-amino-acid chain; its full sequence is ATPase BagA (340 aa).

The ATP site is built by G31, G33, K34, S35, T36, N240, P316, and V318.

Belongs to the arsA ATPase family. BagA/BagB subfamily. As to quaternary structure, forms a heterodimer composed of BagA and BagB. Interacts with Rv1509. Also interacts with a large number of proteins, including proteins required for mycolic acid biosynthesis.

Its activity is regulated as follows. The ATPase activity of the BagAB complex is not stimulated by antimonite, an arsenite substitute, suggesting that BagAB is not a transporter for this family of elements. Its function is as follows. Component of the heterodimeric BagAB ATPase complex, whose two subunits are actively involved in ATP hydrolysis. The ATPase activity is required to mediate resistance against nitric oxide (NO) and elevated levels of glycerol. The polypeptide is ATPase BagA (Mycobacterium tuberculosis (strain ATCC 25618 / H37Rv)).